The following is a 290-amino-acid chain: Protease HtpX homolog (290 aa).

Transmembrane regions (helical) follow at residues 4–24 and 39–59; these read IFLFIATNIAVIAVMSVVLSL and PMLLVFSLVVGFTGSIISLLI. Position 144 (histidine 144) interacts with Zn(2+). Glutamate 145 is a catalytic residue. Histidine 148 lines the Zn(2+) pocket. 2 helical membrane passes run 159–179 and 197–217; these read LVQGVVNTFVVFLSRVVGYFV and ITVIVSQIVFGIAASVIVAWF. Glutamate 222 contributes to the Zn(2+) binding site.

The protein belongs to the peptidase M48B family. Zn(2+) serves as cofactor.

The protein localises to the cell inner membrane. This is Protease HtpX homolog from Janthinobacterium sp. (strain Marseille) (Minibacterium massiliensis).